Reading from the N-terminus, the 140-residue chain is uncharacterized protein (140 aa).

This is an uncharacterized protein from Synechococcus sp. (strain WH8020).